Consider the following 513-residue polypeptide: Secreted LysM effector Vd6LysM (513 aa).

The N-terminal stretch at 1-19 (MSFIKSLLLAAAAVASVSA) is a signal peptide. 4 consecutive LysM domains span residues 38-85 (SYWV…SYCV), 136-182 (KFHW…NVCV), 219-265 (KFHW…QVCV), and 302-348 (KFHW…QVCV). A compositionally biased stretch (low complexity) spans 357–367 (TTTRPPTTTAP). The disordered stretch occupies residues 357-377 (TTTRPPTTTAPGNGVSTPQPT). LysM domains follow at residues 387–433 (KFHW…NVCV) and 465–511 (KFHW…NVCV).

The protein belongs to the secreted LysM effector family.

Its function is as follows. Might have a role in sequestration of chitin oligosaccharides (breakdown products of fungal cell walls that are released during invasion and act as triggers of host immunity) to dampen host defense. Does not play an important role during host colonization. The sequence is that of Secreted LysM effector Vd6LysM from Verticillium dahliae (strain VdLs.17 / ATCC MYA-4575 / FGSC 10137) (Verticillium wilt).